We begin with the raw amino-acid sequence, 306 residues long: MQKVLAIVGPTAIGKTDLAISLAKKLNGEIVSGDSMQVYHEVEVGTAKATKEEQAEVKHYLVDTRSVFDEYSVKDFVDEATEAINDIGEKNKLPILAGGTGFYVNALLNKMQLGERKEEDSGTSQKWEDYLKQNGPQKLWDILNEKDPEAAKKIPVPNSRRTMRALTVIDRTGKKFSQQQKKIEPRYDYLIIGLNSDRQEIYRRINLRVDRMMQKGMLEEAKFIYQNRDKEHQVLQAIAYKEFFPYFKGEKTLNECVEQLKTASRRYAKRQLTYFRNQLPVNWFDPLNDPDCEDKIIKNIEAWKNE.

9 to 16 lines the ATP pocket; sequence GPTAIGKT. A substrate-binding site is contributed by 11-16; sequence TAIGKT. The interval 34–37 is interaction with substrate tRNA; sequence DSMQ.

The protein belongs to the IPP transferase family. Monomer. Mg(2+) is required as a cofactor.

It catalyses the reaction adenosine(37) in tRNA + dimethylallyl diphosphate = N(6)-dimethylallyladenosine(37) in tRNA + diphosphate. Its function is as follows. Catalyzes the transfer of a dimethylallyl group onto the adenine at position 37 in tRNAs that read codons beginning with uridine, leading to the formation of N6-(dimethylallyl)adenosine (i(6)A). The sequence is that of tRNA dimethylallyltransferase from Lactobacillus helveticus (strain DPC 4571).